The primary structure comprises 190 residues: MNNYIFIISAPSGAGKSSLLKAFLATDIGKDNYAVAISHTTREPRVGEINSREYYFVTVAEFEQLLSQDGFIEYAKVFKNYYGTSKAELDRLLALGKNIILEIDWQGAQQTRAIYGDRAKSIFILPPSLDELRKRLEKRNTDSKETIDYRMEQVQSEISHADEYDYLLVNDDFSQSLEQLCKYFEQNIQS.

The 183-residue stretch at 3-185 (NYIFIISAPS…SLEQLCKYFE (183 aa)) folds into the Guanylate kinase-like domain. 10–17 (APSGAGKS) serves as a coordination point for ATP.

Belongs to the guanylate kinase family.

The protein localises to the cytoplasm. It catalyses the reaction GMP + ATP = GDP + ADP. In terms of biological role, essential for recycling GMP and indirectly, cGMP. In Francisella tularensis subsp. holarctica (strain LVS), this protein is Guanylate kinase.